A 105-amino-acid chain; its full sequence is MIVTTTNSIEGKQIEQYLGLVSGEVILGANVVRDFLASITDIIGGRSGTYESKLAEGREMAVQEMVKKARNMGANAVIGVDLDFETLRDGMMMCIATGTAVKLKE.

The protein belongs to the UPF0145 family.

This chain is UPF0145 protein Aflv_1588, found in Anoxybacillus flavithermus (strain DSM 21510 / WK1).